The following is a 105-amino-acid chain: Putative zinc finger protein 861 (105 aa).

The segment at 75–97 adopts a C2H2-type zinc-finger fold; sequence YTCKPCGNAFRFHHSFHIHERPH.

The sequence is that of Putative zinc finger protein 861 (ZNF861P) from Homo sapiens (Human).